A 445-amino-acid chain; its full sequence is 3-phosphoshikimate 1-carboxyvinyltransferase (445 aa).

The 3-phosphoshikimate site is built by K28, S29, and R33. K28 provides a ligand contact to phosphoenolpyruvate. Phosphoenolpyruvate-binding residues include G102 and R130. 3-phosphoshikimate-binding residues include S179, S180, Q181, E330, and H357. Residue Q181 coordinates phosphoenolpyruvate. Residue E330 is the Proton acceptor of the active site. Phosphoenolpyruvate-binding residues include R361, R405, and K430.

This sequence belongs to the EPSP synthase family. In terms of assembly, monomer.

The protein localises to the cytoplasm. The enzyme catalyses 3-phosphoshikimate + phosphoenolpyruvate = 5-O-(1-carboxyvinyl)-3-phosphoshikimate + phosphate. The protein operates within metabolic intermediate biosynthesis; chorismate biosynthesis; chorismate from D-erythrose 4-phosphate and phosphoenolpyruvate: step 6/7. In terms of biological role, catalyzes the transfer of the enolpyruvyl moiety of phosphoenolpyruvate (PEP) to the 5-hydroxyl of shikimate-3-phosphate (S3P) to produce enolpyruvyl shikimate-3-phosphate and inorganic phosphate. This chain is 3-phosphoshikimate 1-carboxyvinyltransferase, found in Bifidobacterium longum (strain DJO10A).